Reading from the N-terminus, the 184-residue chain is Endoribonuclease YbeY (184 aa).

3 residues coordinate Zn(2+): His151, His155, and His161.

This sequence belongs to the endoribonuclease YbeY family. Zn(2+) serves as cofactor.

The protein resides in the cytoplasm. Single strand-specific metallo-endoribonuclease involved in late-stage 70S ribosome quality control and in maturation of the 3' terminus of the 16S rRNA. The polypeptide is Endoribonuclease YbeY (Prochlorococcus marinus (strain NATL2A)).